The chain runs to 756 residues: 1,4-alpha-glucan branching enzyme GlgB (756 aa).

D425 functions as the Nucleophile in the catalytic mechanism. E478 serves as the catalytic Proton donor.

This sequence belongs to the glycosyl hydrolase 13 family. GlgB subfamily. As to quaternary structure, monomer.

The enzyme catalyses Transfers a segment of a (1-&gt;4)-alpha-D-glucan chain to a primary hydroxy group in a similar glucan chain.. Its pathway is glycan biosynthesis; glycogen biosynthesis. Its function is as follows. Catalyzes the formation of the alpha-1,6-glucosidic linkages in glycogen by scission of a 1,4-alpha-linked oligosaccharide from growing alpha-1,4-glucan chains and the subsequent attachment of the oligosaccharide to the alpha-1,6 position. The protein is 1,4-alpha-glucan branching enzyme GlgB of Cupriavidus necator (strain ATCC 17699 / DSM 428 / KCTC 22496 / NCIMB 10442 / H16 / Stanier 337) (Ralstonia eutropha).